A 371-amino-acid polypeptide reads, in one-letter code: Galanin receptor type 2 (371 aa).

The Extracellular portion of the chain corresponds to 1 to 27; the sequence is MNGSDSQGAEDSSQEGGGGWQPEAVLV. The N-linked (GlcNAc...) asparagine glycan is linked to asparagine 2. A helical transmembrane segment spans residues 28 to 48; sequence PLFFALIFLVGAVGNALVLAV. The Cytoplasmic portion of the chain corresponds to 49 to 59; it reads LLRGGQAVSTT. A helical membrane pass occupies residues 60 to 80; the sequence is NLFILNLGVADLCFILCCVPF. Topologically, residues 81 to 98 are extracellular; the sequence is QATIYTLDDWVFGSLLCK. Cysteines 97 and 174 form a disulfide. A helical membrane pass occupies residues 99–120; that stretch reads AVHFLIFLTMHASSFTLAAVSL. Topologically, residues 121 to 140 are cytoplasmic; it reads DRYLAIRYPLHSRELRTPRN. The chain crosses the membrane as a helical span at residues 141–161; it reads ALAAIGLIWGLALLFSGPYLS. At 162-186 the chain is on the extracellular side; it reads YYSQSQLANLTVCHPAWSAPRRRAM. A helical membrane pass occupies residues 187–207; sequence DLCTFVFSYLLPVLVLSLTYA. The Cytoplasmic portion of the chain corresponds to 208 to 236; that stretch reads RTLHYLWRTVDPVAAGSGSQRAKRKVTRM. A helical membrane pass occupies residues 237–257; the sequence is IVIVAVLFCLCWMPHHALILC. The Extracellular segment spans residues 258 to 259; the sequence is VW. Residues 260–280 traverse the membrane as a helical segment; that stretch reads FGRFPLTRATYALRILSHLVS. At 281–371 the chain is on the cytoplasmic side; that stretch reads YANSCVNPIV…TLSRTLDPAC (91 aa).

Belongs to the G-protein coupled receptor 1 family.

It is found in the cell membrane. Functionally, receptor for the hormone galanin, GALP and spexin-1. The activity of this receptor is mediated by G proteins that activate the phospholipase C/protein kinase C pathway (via G(q)) and that inhibit adenylyl cyclase (via G(i)). The chain is Galanin receptor type 2 (Galr2) from Mus musculus (Mouse).